We begin with the raw amino-acid sequence, 492 residues long: Catalase-3 (492 aa).

Residues histidine 65 and asparagine 138 contribute to the active site. Tyrosine 348 contacts heme.

Belongs to the catalase family. Homotetramer and heterotetramer. At least six or seven isozymes are produced from a mixture of 3 gene products. Interacts with NCA1. Interacts with LSD1. It depends on heme as a cofactor.

The protein resides in the peroxisome. It carries out the reaction 2 H2O2 = O2 + 2 H2O. Its function is as follows. Occurs in almost all aerobically respiring organisms and serves to protect cells from the toxic effects of hydrogen peroxide. The protein is Catalase-3 (CAT3) of Arabidopsis thaliana (Mouse-ear cress).